The sequence spans 219 residues: Thymidylate kinase (219 aa).

7–14 (GIDGAGKS) is a binding site for ATP.

This sequence belongs to the thymidylate kinase family.

It carries out the reaction dTMP + ATP = dTDP + ADP. In terms of biological role, phosphorylation of dTMP to form dTDP in both de novo and salvage pathways of dTTP synthesis. This is Thymidylate kinase from Chlorobium limicola (strain DSM 245 / NBRC 103803 / 6330).